Reading from the N-terminus, the 170-residue chain is MSEENQVNAADTQATQQPVLQIQRIYVKDVSFEAPNLPHIFQQDWEPKLSFDLSTEAKQVGDDLYEVCLNISVETTMESSGDVAFICEVKQAGVFTISGLEEMQMAHCLTSQCPNMLFPYARELVSSLVNRGTFPALNLSPVNFDALFMDYLQRQEQAEQTTEEENKDVH.

Belongs to the SecB family. Homotetramer, a dimer of dimers. One homotetramer interacts with 1 SecA dimer.

It localises to the cytoplasm. Its function is as follows. One of the proteins required for the normal export of preproteins out of the cell cytoplasm. It is a molecular chaperone that binds to a subset of precursor proteins, maintaining them in a translocation-competent state. It also specifically binds to its receptor SecA. In Pasteurella multocida (strain Pm70), this protein is Protein-export protein SecB.